The primary structure comprises 247 residues: Potassium channel Ftrac_2467 (247 aa).

6 helical membrane-spanning segments follow: residues 23 to 44 (TRIE…VLSS), 56 to 78 (SMRD…YQHY), 89 to 117 (KVTI…RFLS), 142 to 165 (LKLL…LMYW), 187 to 210 (SIIA…IDPW), and 215 to 237 (TTIL…GRIT). Residues 24–30 (RIETFSD) carry the RxxxFSD motif motif.

It belongs to the TMEM175 family. Homotetramer.

It localises to the cell membrane. It catalyses the reaction K(+)(in) = K(+)(out). Functionally, potassium channel; forms a potassium-permeable leak-like channel with weak selectivity for potassium. The channel is permeable for K(+), Rb(+) and Cs(+). This chain is Potassium channel Ftrac_2467, found in Marivirga tractuosa (strain ATCC 23168 / DSM 4126 / NBRC 15989 / NCIMB 1408 / VKM B-1430 / H-43) (Microscilla tractuosa).